A 1179-amino-acid chain; its full sequence is Calcium-activated potassium channel subunit alpha-1 (1179 aa).

Residues 1–24 (MANGGGGGGGSSGGGGGGGGGGSG) are compositionally biased toward gly residues. The disordered stretch occupies residues 1 to 62 (MANGGGGGGG…SSSSSSSSSV (62 aa)). At 1-87 (MANGGGGGGG…VPCDSRGQRM (87 aa)) the chain is on the extracellular side. The segment covering 41-61 (SSSSSSSSSSSSSSSSSSSSS) has biased composition (low complexity). The chain crosses the membrane as a helical span at residues 88–108 (WWAFLASSMVTFFGGLFIILL). Residues 109 to 179 (WRTLKYLWTV…MISAQTLTGR (71 aa)) lie on the Cytoplasmic side of the membrane. Residues C119, C120, and C122 are each lipidated (S-palmitoyl cysteine). A helical membrane pass occupies residues 180–200 (VLVVLVFALSIGALVIYFIDS). Residues 201 to 215 (SNPIESCQNFYKDFT) lie on the Extracellular side of the membrane. Residues 216–236 (LQIDMAFNVFFLLYFGLRFIA) traverse the membrane as a helical segment. Residues 237–240 (ANDK) lie on the Cytoplasmic side of the membrane. The helical transmembrane segment at 241-261 (LWFWLEVNSVVDFFTVPPVFV) threads the bilayer. The Extracellular segment spans residues 262 to 265 (SVYL). A helical; Voltage-sensor membrane pass occupies residues 266–286 (NRSWLGLRFLRALRLIQFSEI). Residues 287–301 (LQFLNILKTSNSIKL) lie on the Cytoplasmic side of the membrane. A helical transmembrane segment spans residues 302–322 (VNLLSIFISTWLTAAGFIHLV). The Extracellular portion of the chain corresponds to 323–336 (ENSGDPWENFQNNQ). Positions 337–359 (ALTYWECVYLLMVTMSTVGYGDV) form an intramembrane region, pore-forming. Residues 353–356 (TVGY) carry the Selectivity for potassium motif. Residues 360–368 (YAKTTLGRL) are Extracellular-facing. The chain crosses the membrane as a helical span at residues 369 to 389 (FMVFFILGGLAMFASYVPEII). Residues 390-1179 (ELIGNRKKYG…KQKYVQEERL (790 aa)) lie on the Cytoplasmic side of the membrane. The 143-residue stretch at 408 to 550 (RKHIVVCGHI…WNWKEGDDAI (143 aa)) folds into the RCK N-terminal 1 domain. Mg(2+) contacts are provided by E440, Q463, and E465. The tract at residues 557-577 (LGFIAQSCLAQGLSTMLANLF) is segment S7. The interval 614–634 (LSFPTVCELCFVKLKLLMIAI) is segment S8. Positions 678–682 (CKACH) are heme-binding motif. Residues 702–730 (EQPSTLSPKKKQRNGGMRNSPNSSPKLMR) are disordered. T706 is modified (phosphothreonine). Phosphoserine is present on residues S708, S721, and S725. The segment S9 stretch occupies residues 780-800 (VLSGHVVVCIFGDVSSALIGL). The RCK N-terminal 2 domain maps to 782–926 (SGHVVVCIFG…MDRSSPDNSP (145 aa)). At T913 the chain carries Phosphothreonine. Residues S921 and S925 each carry the phosphoserine modification. Residues 946-968 (TELVNDTNVQFLDQDDDDDPDTE) carry the Calcium bowl motif. Ca(2+) is bound by residues Q955, D958, D961, and D963. The segment at 975 to 995 (FACGTAFAVSVLDSLMSATYF) is segment S10. Low complexity predominate over residues 1129–1154 (RASLSHSSHSSQSSSKKSSSVHSIPS). Residues 1129–1179 (RASLSHSSHSSQSSSKKSSSVHSIPSTANRQNRPKSRESRDKQKYVQEERL) form a disordered region. The segment covering 1163–1179 (KSRESRDKQKYVQEERL) has biased composition (basic and acidic residues). A phosphoserine mark is found at S1164 and S1167.

The protein belongs to the potassium channel family. Calcium-activated (TC 1.A.1.3) subfamily. KCa1.1/KCNMA1 sub-subfamily. In terms of assembly, homotetramer; which constitutes the calcium-activated potassium channel. Interacts with beta subunits KCNMB1, KCNMB2, KCNMB3 and KCNMB4. Interacts with gamma subunits LRRC26, LRRC38, LRRC52 and LRRC55. Beta and gamma subunits are accessory, and modulate its activity. Interacts with RAB11B. Phosphorylated. Phosphorylation by kinases such as PKA and/or PKG. In smooth muscles, phosphorylation affects its activity. In terms of processing, palmitoylation by ZDHHC22 and ZDHHC23 within the intracellular linker between the S0 and S1 transmembrane domains regulates localization to the plasma membrane. Depalmitoylated by LYPLA1 and LYPLAL1, leading to retard exit from the trans-Golgi network.

Its subcellular location is the cell membrane. It localises to the endoplasmic reticulum membrane. It catalyses the reaction K(+)(in) = K(+)(out). Ethanol and carbon monoxide-bound heme increase channel activation. Heme inhibits channel activation. Its function is as follows. Potassium channel activated by both membrane depolarization or increase in cytosolic Ca(2+) that mediates export of K(+). It is also activated by the concentration of cytosolic Mg(2+). Its activation dampens the excitatory events that elevate the cytosolic Ca(2+) concentration and/or depolarize the cell membrane. It therefore contributes to repolarization of the membrane potential. Plays a key role in controlling excitability in a number of systems, such as regulation of the contraction of smooth muscle, the tuning of hair cells in the cochlea, regulation of transmitter release, and innate immunity. In smooth muscles, its activation by high level of Ca(2+), caused by ryanodine receptors in the sarcoplasmic reticulum, regulates the membrane potential. In cochlea cells, its number and kinetic properties partly determine the characteristic frequency of each hair cell and thereby helps to establish a tonotopic map. Kinetics of KCNMA1 channels are determined by alternative splicing, phosphorylation status and its combination with modulating beta subunits. Highly sensitive to both iberiotoxin (IbTx) and charybdotoxin (CTX). Potassium channel activated by both membrane depolarization or increase in cytosolic Ca(2+) that mediates export of K(+). The sequence is that of Calcium-activated potassium channel subunit alpha-1 (KCNMA1) from Oryctolagus cuniculus (Rabbit).